A 664-amino-acid polypeptide reads, in one-letter code: Chaperone protein DnaK (664 aa).

At threonine 201 the chain carries Phosphothreonine; by autocatalysis. Disordered regions lie at residues 516-538 (DAEK…NEAD) and 578-664 (APVE…KPND). A compositionally biased stretch (basic and acidic residues) spans 578–592 (APVEKIKDASEELSR). 2 stretches are compositionally biased toward low complexity: residues 600–617 (AMQS…ANAQ) and 638–649 (AGNSASSNSNNE).

This sequence belongs to the heat shock protein 70 family.

Its function is as follows. Acts as a chaperone. The protein is Chaperone protein DnaK of Chlamydia caviae (strain ATCC VR-813 / DSM 19441 / 03DC25 / GPIC) (Chlamydophila caviae).